A 644-amino-acid chain; its full sequence is DNA gyrase subunit B (644 aa).

A Toprim domain is found at 429–543; it reads CEIFLVEGDS…AGYVYIAQPP (115 aa). Mg(2+) is bound by residues Glu435, Asp508, and Asp510.

This sequence belongs to the type II topoisomerase GyrB family. As to quaternary structure, heterotetramer, composed of two GyrA and two GyrB chains. In the heterotetramer, GyrA contains the active site tyrosine that forms a transient covalent intermediate with DNA, while GyrB binds cofactors and catalyzes ATP hydrolysis. It depends on Mg(2+) as a cofactor. The cofactor is Mn(2+). Ca(2+) serves as cofactor.

Its subcellular location is the cytoplasm. The enzyme catalyses ATP-dependent breakage, passage and rejoining of double-stranded DNA.. Functionally, a type II topoisomerase that negatively supercoils closed circular double-stranded (ds) DNA in an ATP-dependent manner to modulate DNA topology and maintain chromosomes in an underwound state. Negative supercoiling favors strand separation, and DNA replication, transcription, recombination and repair, all of which involve strand separation. Also able to catalyze the interconversion of other topological isomers of dsDNA rings, including catenanes and knotted rings. Type II topoisomerases break and join 2 DNA strands simultaneously in an ATP-dependent manner. In Staphylococcus aureus (strain MRSA252), this protein is DNA gyrase subunit B.